Consider the following 162-residue polypeptide: Transcription elongation factor GreA (162 aa).

Residues 45–74 (ENAEYEAAREKQAFIEGRIKELEDMTARAE) adopt a coiled-coil conformation.

This sequence belongs to the GreA/GreB family.

Functionally, necessary for efficient RNA polymerase transcription elongation past template-encoded arresting sites. The arresting sites in DNA have the property of trapping a certain fraction of elongating RNA polymerases that pass through, resulting in locked ternary complexes. Cleavage of the nascent transcript by cleavage factors such as GreA or GreB allows the resumption of elongation from the new 3'terminus. GreA releases sequences of 2 to 3 nucleotides. This Rickettsia prowazekii (strain Madrid E) protein is Transcription elongation factor GreA.